The primary structure comprises 341 residues: Glyceraldehyde-3-phosphate dehydrogenase 2 (341 aa).

Residues 12 to 13 (RI), Arg78, and Thr120 contribute to the NAD(+) site. D-glyceraldehyde 3-phosphate is bound by residues 152–154 (SCT) and Thr183. Cys153 functions as the Nucleophile in the catalytic mechanism. Asn184 contributes to the NAD(+) binding site. D-glyceraldehyde 3-phosphate contacts are provided by residues Arg198, 211 to 212 (TG), and Arg234. Residue Asn313 participates in NAD(+) binding.

This sequence belongs to the glyceraldehyde-3-phosphate dehydrogenase family. As to quaternary structure, homotetramer.

Its subcellular location is the cytoplasm. The enzyme catalyses D-glyceraldehyde 3-phosphate + phosphate + NAD(+) = (2R)-3-phospho-glyceroyl phosphate + NADH + H(+). It functions in the pathway carbohydrate degradation; glycolysis; pyruvate from D-glyceraldehyde 3-phosphate: step 1/5. Its function is as follows. Catalyzes the oxidative phosphorylation of glyceraldehyde 3-phosphate (G3P) to 1,3-bisphosphoglycerate (BPG) using the cofactor NAD. The first reaction step involves the formation of a hemiacetal intermediate between G3P and a cysteine residue, and this hemiacetal intermediate is then oxidized to a thioester, with concomitant reduction of NAD to NADH. The reduced NADH is then exchanged with the second NAD, and the thioester is attacked by a nucleophilic inorganic phosphate to produce BPG. The chain is Glyceraldehyde-3-phosphate dehydrogenase 2 (gapA2) from Staphylococcus epidermidis (strain ATCC 12228 / FDA PCI 1200).